We begin with the raw amino-acid sequence, 1812 residues long: Breast cancer type 1 susceptibility protein homolog (1812 aa).

N-acetylmethionine is present on Met-1. Residues Cys-24–Lys-65 form an RING-type zinc finger. A Glycyl lysine isopeptide (Lys-Gly) (interchain with G-Cter in SUMO2) cross-link involves residue Lys-109. Ser-114 is subject to Phosphoserine. Residues Lys-165–Ser-176 show a composition bias toward basic residues. The disordered stretch occupies residues Lys-165 to Val-198. A Glycyl lysine isopeptide (Lys-Gly) (interchain with G-Cter in SUMO2) cross-link involves residue Lys-298. The segment covering Ser-321 to Ser-332 has biased composition (polar residues). A disordered region spans residues Ser-321–Gly-362. Residue Lys-336 forms a Glycyl lysine isopeptide (Lys-Gly) (interchain with G-Cter in SUMO2) linkage. Over residues His-352–Gly-362 the composition is skewed to polar residues. Position 392 is a phosphoserine (Ser-392). Residues Lys-440, Lys-456, and Lys-512 each participate in a glycyl lysine isopeptide (Lys-Gly) (interchain with G-Cter in SUMO2) cross-link. Disordered regions lie at residues Pro-492–Ile-581 and Ser-640–Thr-767. A compositionally biased stretch (polar residues) spans Gln-538 to Leu-556. 2 stretches are compositionally biased toward basic and acidic residues: residues Gln-557 to Pro-572 and Ala-669 to His-679. 3 positions are modified to phosphoserine: Ser-686, Ser-706, and Ser-717. Polar residues-rich tracts occupy residues Thr-702–Asp-733 and Ser-758–Thr-767. Ser-831 carries the phosphoserine modification. Disordered regions lie at residues Lys-864–Glu-899, Gly-947–Met-995, Val-1030–Asp-1056, Arg-1147–Asp-1185, and Cys-1205–Asp-1230. Residues Gly-947–Ser-972 show a composition bias toward polar residues. Ser-971 carries the phosphoserine; by CHEK2 modification. Over residues Ile-973–Ser-991 the composition is skewed to basic and acidic residues. Ser-992 carries the phosphoserine modification. Residue Lys-1048 forms a Glycyl lysine isopeptide (Lys-Gly) (interchain with G-Cter in SUMO2) linkage. A compositionally biased stretch (polar residues) spans Arg-1151–His-1166. Ser-1152, Ser-1154, Ser-1174, and Ser-1180 each carry phosphoserine. Residues Ser-1175 to Asp-1185 are compositionally biased toward acidic residues. Phosphoserine is present on Ser-1241. Residues His-1244–Cys-1289 are disordered. The segment covering Ser-1255–Ile-1279 has biased composition (polar residues). Ser-1297 and Ser-1303 each carry phosphoserine. The segment covering Glu-1313–Ile-1323 has biased composition (acidic residues). The interval Glu-1313–Ser-1343 is disordered. Residues Glu-1333–Ser-1343 are compositionally biased toward polar residues. Ser-1343 carries the post-translational modification Phosphoserine. Phosphothreonine is present on Thr-1350. Positions Arg-1353–Gln-1380 are interaction with PALB2. Ser-1413, Ser-1481, and Ser-1495 each carry phosphoserine. The segment at His-1437–Thr-1547 is disordered. The segment covering Glu-1492 to Ser-1504 has biased composition (polar residues). Basic and acidic residues predominate over residues Arg-1527–Ala-1538. 2 BRCT domains span residues Ser-1585 to Val-1679 and Ser-1698 to Val-1797.

As to quaternary structure, heterodimer with BARD1. Part of the BRCA1-associated genome surveillance complex (BASC), which contains BRCA1, MSH2, MSH6, MLH1, ATM, BLM, PMS2 and the MRE11-RAD50-NBN protein (MRN) complex. This association could be a dynamic process changing throughout the cell cycle and within subnuclear domains. Component of the BRCA1-A complex, at least composed of BRCA1, BARD1, UIMC1/RAP80, ABRAXAS1, BRCC3/BRCC36, BABAM2 and BABAM1/NBA1. Interacts (via the BRCT domains) with ABRAXAS1 (phosphorylated form); this is important for recruitment to sites of DNA damage. Can form a heterotetramer with two molecules of ABRAXAS1 (phosphorylated form). Component of the BRCA1-RBBP8 complex. Interacts (via the BRCT domains) with RBBP8 ('Ser-327' phosphorylated form); the interaction ubiquitinates RBBP8, regulates CHEK1 activation, and involves RBBP8 in BRCA1-dependent G2/M checkpoint control on DNA damage. Associates with RNA polymerase II holoenzyme. Interacts with SMC1A, NELFB, DCLRE1C, CLSPN. CHEK1, CHEK2, BAP1, BRCC3, UBXN1 and PCLAF. Interacts (via BRCT domains) with BRIP1 (phosphorylated form). Interacts with FANCD2 (ubiquitinated form). Interacts with H2AX (phosphorylated on 'Ser-140'). Interacts (via the BRCT domains) with ACACA (phosphorylated form); the interaction prevents dephosphorylation of ACACA. Part of a BRCA complex containing BRCA1, BRCA2 and PALB2. Interacts directly with PALB2; the interaction is essential for its function in HRR. Interacts directly with BRCA2; the interaction occurs only in the presence of PALB2 which serves as the bridging protein. Interacts (via the BRCT domains) with LMO4; the interaction represses the transcriptional activity of BRCA1. Interacts (via the BRCT domains) with CCAR2 (via N-terminus); the interaction represses the transcriptional activator activity of BRCA1. Interacts with EXD2. Interacts (via C-terminus) with DHX9; this interaction is direct and links BRCA1 to the RNA polymerase II holoenzyme. Interacts with DNA helicase ZGRF1; the interaction is increased following DNA damage induction. In terms of processing, phosphorylated in response to IR, UV, and various stimuli that cause checkpoint activation, probably by ATM or ATR. Phosphorylation at Ser-971 by CHEK2 regulates mitotic spindle assembly. Phosphorylation by AURKA regulates centrosomal microtubule nucleation. Autoubiquitinated, undergoes 'Lys-6'-linked polyubiquitination. 'Lys-6'-linked polyubiquitination does not promote degradation. As to expression, in the embryo, expressed in otic vesicles at day 9.5. At day 10.5, this expression decreases and high levels are found in the neuroectoderm. At days 11-12.5, high levels in differentiating keratinocytes and whisker pad primordia. At days 14-17, expression also observed in kidney epithelial cells. In the adult, highest levels found in spleen, thymus, lymph nodes, epithelial organs, and alveolar and ductal epithelial cells of the mammary gland. Very low levels in brain, kidney, and skin. No expression in heart, liver or lung.

The protein localises to the nucleus. It localises to the chromosome. The protein resides in the cytoplasm. It catalyses the reaction S-ubiquitinyl-[E2 ubiquitin-conjugating enzyme]-L-cysteine + [acceptor protein]-L-lysine = [E2 ubiquitin-conjugating enzyme]-L-cysteine + N(6)-ubiquitinyl-[acceptor protein]-L-lysine.. It functions in the pathway protein modification; protein ubiquitination. Functionally, E3 ubiquitin-protein ligase that specifically mediates the formation of 'Lys-6'-linked polyubiquitin chains and plays a central role in DNA repair by facilitating cellular responses to DNA damage. It is unclear whether it also mediates the formation of other types of polyubiquitin chains. The BRCA1-BARD1 heterodimer coordinates a diverse range of cellular pathways such as DNA damage repair, ubiquitination and transcriptional regulation to maintain genomic stability. Regulates centrosomal microtubule nucleation. Required for appropriate cell cycle arrests after ionizing irradiation in both the S-phase and the G2 phase of the cell cycle. Required for FANCD2 targeting to sites of DNA damage. Inhibits lipid synthesis by binding to inactive phosphorylated ACACA and preventing its dephosphorylation. Contributes to homologous recombination repair (HRR) via its direct interaction with PALB2, fine-tunes recombinational repair partly through its modulatory role in the PALB2-dependent loading of BRCA2-RAD51 repair machinery at DNA breaks. Component of the BRCA1-RBBP8 complex which regulates CHEK1 activation and controls cell cycle G2/M checkpoints on DNA damage via BRCA1-mediated ubiquitination of RBBP8. Acts as a transcriptional activator. In Mus musculus (Mouse), this protein is Breast cancer type 1 susceptibility protein homolog (Brca1).